Here is a 502-residue protein sequence, read N- to C-terminus: MSIRAEEISALIKQQIENYQSEIEVSDVGTVIQVGDGIARAHGLDNVMAGELVEFANGVMGLAQNLEENNVGIIILGPYTEIREGDEVRRTGRIMQVPVGEELIGRVVNPLGQPVDGLGPIHTTKTRPIESPAPGVMDRKSVHEPLQTGIKAIDALVPIGRGQRELIIGDRQTGKTAVALDTILNQKDEDMICIYVAIGQKESTVRNVVETLRKHGALEYTIVVTASASQPAPLLYLAPYAGVSMGEEFMYNGKHVLVVYDDLSKQAAAYRELSLLLRRPPGREAYPGDVFYLHSRLLERAAKLSDAKGGGSLTALPFIETQAGDVSAYIPTNVISITDGQIFLQSDLFFSGVRPAIDAGTSVSRVGGSAQIKAMSKVSGTLRLDLASYRELEAFAQFGSDLDKATQAKLNRGARTVEVLKQGLHKPLRVEKQVMILYALTRGFLDDIPVADITRFEEEFYAWLDSNAADLLEEIRTTKKLADDDKFAAAINGFKKVFVASE.

The disordered stretch occupies residues 115 to 136 (VDGLGPIHTTKTRPIESPAPGV). 169-176 (GDRQTGKT) contacts ATP.

Belongs to the ATPase alpha/beta chains family. F-type ATPases have 2 components, CF(1) - the catalytic core - and CF(0) - the membrane proton channel. CF(1) has five subunits: alpha(3), beta(3), gamma(1), delta(1), epsilon(1). CF(0) has three main subunits: a(1), b(2) and c(9-12). The alpha and beta chains form an alternating ring which encloses part of the gamma chain. CF(1) is attached to CF(0) by a central stalk formed by the gamma and epsilon chains, while a peripheral stalk is formed by the delta and b chains.

The protein resides in the cell membrane. It carries out the reaction ATP + H2O + 4 H(+)(in) = ADP + phosphate + 5 H(+)(out). In terms of biological role, produces ATP from ADP in the presence of a proton gradient across the membrane. The alpha chain is a regulatory subunit. This chain is ATP synthase subunit alpha, found in Bacillus cytotoxicus (strain DSM 22905 / CIP 110041 / 391-98 / NVH 391-98).